The sequence spans 286 residues: Secretory carrier-associated membrane protein 2 (286 aa).

Basic and acidic residues-rich tracts occupy residues 1 to 10 and 54 to 63; these read MAGRYDRNPF and STKDMKKKEK. Residues 1–63 are disordered; that stretch reads MAGRYDRNPF…STKDMKKKEK (63 aa). Residues 1–126 are Cytoplasmic-facing; sequence MAGRYDRNPF…LQRMQYLAFS (126 aa). The stretch at 52 to 89 forms a coiled coil; sequence LDSTKDMKKKEKELQAKEAELNKRESELRRREEAASRA. Transmembrane regions (helical) follow at residues 127–147, 152–172, 189–209, and 237–257; these read SLLG…AAWI, VMIW…AYVL, FGWF…SAVA, and IFYF…VVVI. Residues 258–286 are Cytoplasmic-facing; it reads QQVYMYFRGSGKAAEMKREAARGAMRSAF.

This sequence belongs to the SCAMP family.

It localises to the cell membrane. It is found in the cytoplasmic vesicle. Its subcellular location is the secretory vesicle membrane. In terms of biological role, probably involved in membrane trafficking. This is Secretory carrier-associated membrane protein 2 (SCAMP2) from Oryza sativa subsp. japonica (Rice).